The chain runs to 233 residues: Large ribosomal subunit protein uL3 (233 aa).

A disordered region spans residues 146–171 (GSQRASHGNSRSHRVPGSIGQAQDPG). At Gln-168 the chain carries N5-methylglutamine.

The protein belongs to the universal ribosomal protein uL3 family. As to quaternary structure, part of the 50S ribosomal subunit. Forms a cluster with proteins L14 and L19. Post-translationally, methylated by PrmB.

Functionally, one of the primary rRNA binding proteins, it binds directly near the 3'-end of the 23S rRNA, where it nucleates assembly of the 50S subunit. In Bordetella bronchiseptica (strain ATCC BAA-588 / NCTC 13252 / RB50) (Alcaligenes bronchisepticus), this protein is Large ribosomal subunit protein uL3.